The chain runs to 152 residues: UPF0260 protein BR1477/BS1330_I1471 (152 aa).

It belongs to the UPF0260 family.

The chain is UPF0260 protein BR1477/BS1330_I1471 from Brucella suis biovar 1 (strain 1330).